The sequence spans 296 residues: uncharacterized protein (296 aa).

One can recognise an HTH lysR-type domain in the interval 1–60 (MDPKISYFQTFIVASKTKSFSKAAKRLGITQGTVSNHISALEKYFDAQLFLRTPEGVDLT). Positions 20–39 (FSKAAKRLGITQGTVSNHIS) form a DNA-binding region, H-T-H motif.

This sequence belongs to the LysR transcriptional regulatory family.

This is an uncharacterized protein from Methanocaldococcus jannaschii (strain ATCC 43067 / DSM 2661 / JAL-1 / JCM 10045 / NBRC 100440) (Methanococcus jannaschii).